The sequence spans 161 residues: Peroxynitrite isomerase 1 (161 aa).

The GXWXGXG motif lies at 17–23; that stretch reads GTWTGRG. Heme b is bound at residue His152.

This sequence belongs to the nitrobindin family. Homodimer. Requires heme b as cofactor.

It carries out the reaction peroxynitrite = nitrate. It participates in nitrogen metabolism. In terms of biological role, heme-binding protein able to scavenge peroxynitrite and to protect free L-tyrosine against peroxynitrite-mediated nitration, by acting as a peroxynitrite isomerase that converts peroxynitrite to nitrate. Therefore, this protein likely plays a role in peroxynitrite sensing and in the detoxification of reactive nitrogen and oxygen species (RNS and ROS, respectively). Is able to bind nitric oxide (NO) in vitro, but may act as a sensor of peroxynitrite levels in vivo. This chain is Peroxynitrite isomerase 1, found in Mycolicibacterium paratuberculosis (strain ATCC BAA-968 / K-10) (Mycobacterium paratuberculosis).